Here is a 244-residue protein sequence, read N- to C-terminus: MRNIKLIIEFDGTNFCGWQRQIKDRTVQGCLEKAILKITGEKSLTNGSSRTDGGVHAKAMVANFITNSSIPGEKFREALNTKLPDDIAVIKSEEVDMDFHARYSSKGKMYSYTIVNRYEKLSFGKQYVHHVRKELNVEDMKKACECFIGKHDFKAFMSPGSSAKTTVRTIQEFYIEKNEDVIKIFISADGFLYNMVRIIVGTLINIGTGKTKLEDVDNIINDGIRKRSGMCVPPNGLVLEKVFY.

The active-site Nucleophile is aspartate 52. Substrate is bound at residue tyrosine 110.

It belongs to the tRNA pseudouridine synthase TruA family. As to quaternary structure, homodimer.

The enzyme catalyses uridine(38/39/40) in tRNA = pseudouridine(38/39/40) in tRNA. Formation of pseudouridine at positions 38, 39 and 40 in the anticodon stem and loop of transfer RNAs. In Clostridium botulinum (strain Eklund 17B / Type B), this protein is tRNA pseudouridine synthase A.